We begin with the raw amino-acid sequence, 509 residues long: Putative 6-phosphofructo-2-kinase/fructose-2,6-bisphosphatase YLR345W (509 aa).

A Phosphoserine modification is found at Ser6. The 6-phosphofructo-2-kinase stretch occupies residues 6 to 291 (SDDEELLNGL…FFLMNLRQKK (286 aa)). An ATP-binding site is contributed by 90–98 (GLPATSKTL). Asp173 functions as the Proton donor/acceptor in the catalytic mechanism. Position 212-217 (212-217 (NIALAL)) interacts with ATP. Arg237 provides a ligand contact to beta-D-fructose 6-phosphate. The segment at 292-466 (GCVYFARCGT…IAHESTLRVL (175 aa)) is fructose-2,6-bisphosphatase. A beta-D-fructose 2,6-bisphosphate-binding site is contributed by Arg298. 415-418 (YKES) lines the ATP pocket. Tyr433 and Arg464 together coordinate beta-D-fructose 2,6-bisphosphate. 460 to 464 (ESTLR) lines the ATP pocket.

It in the C-terminal section; belongs to the phosphoglycerate mutase family. In terms of assembly, homodimer.

It is found in the cytoplasm. It catalyses the reaction beta-D-fructose 2,6-bisphosphate + H2O = beta-D-fructose 6-phosphate + phosphate. The enzyme catalyses beta-D-fructose 6-phosphate + ATP = beta-D-fructose 2,6-bisphosphate + ADP + H(+). In terms of biological role, synthesis and degradation of fructose 2,6-bisphosphate. The sequence is that of Putative 6-phosphofructo-2-kinase/fructose-2,6-bisphosphatase YLR345W from Saccharomyces cerevisiae (strain ATCC 204508 / S288c) (Baker's yeast).